The sequence spans 490 residues: MATEFIKSCCGGCFYGETEKHNFSVERDFKAAVPNSQNATISVPPLTSVSVKPQLGCTEDYLLSKLPSDGKEVPFVVPKFKLSYIQPRTQETPSHLEELEGSARASFGDRKVELSSSSQHGPSYDVYNPFYMYQHISPDLSRRFPPRSEVKRLYGSVCDLRTNKLPGSPGLSKSMFDLTNSSQRFIQRHDSLSSVPSSSSSRKNSQGSNRSLDTITLSGDERDFGRLNVKLFYNSSVEQIWITVLQCRDLSWPSSYGDTPTVSIKGILTLPKPVHFKSSAKEGSNAIEFMETFVFAIKLQNLQTVRLVFKIQTQTPRKKTIGECSMSLRTLSTQEMDYSLDITPPSKISVCHAELELGTCFQAVNSRIQLQILEARYLPSSSTPLTLSFFVKVGMFSSGELIYKKKTRLLKASNGRVKWGETMIFPLIQSEKEIVFLIKLYSRSSVRRKHFVGQIWISEDSNNIEAVNQWKETVINPEKVVIRWHKLNPS.

A phosphoserine mark is found at Ser-83, Ser-156, Ser-168, Ser-174, and Ser-211. The disordered stretch occupies residues 189–215; it reads HDSLSSVPSSSSSRKNSQGSNRSLDTI. Positions 192–211 are enriched in low complexity; it reads LSSVPSSSSSRKNSQGSNRS. Residues Thr-214 and Thr-216 each carry the phosphothreonine modification. Ser-218 is subject to Phosphoserine. 2 C2 domains span residues 223-342 and 344-471; these read DFGR…SLDI and PPSK…NQWK. The Nuclear localization signal signature appears at 447-449; the sequence is RRK.

It localises to the nucleus. The polypeptide is Tandem C2 domains nuclear protein (TC2N) (Homo sapiens (Human)).